The primary structure comprises 610 residues: Probable methyltransferase PMT22 (610 aa).

Topologically, residues 1-10 (MIKNIFQSRK) are cytoplasmic. A helical; Signal-anchor for type II membrane protein membrane pass occupies residues 11-31 (LSGLCVLSILLVSVTILLLTN). The Lumenal portion of the chain corresponds to 32–610 (DTIDLFPYLS…LVGLKSSWRP (579 aa)). Residues 56–69 (STPISSPTNDSSPP) are compositionally biased toward low complexity. The interval 56 to 81 (STPISSPTNDSSPPLESPVNQTRVDD) is disordered. Asparagine 64, asparagine 75, asparagine 100, asparagine 400, asparagine 469, and asparagine 546 each carry an N-linked (GlcNAc...) asparagine glycan.

It belongs to the methyltransferase superfamily.

Its subcellular location is the endoplasmic reticulum membrane. This chain is Probable methyltransferase PMT22, found in Arabidopsis thaliana (Mouse-ear cress).